The chain runs to 126 residues: Large ribosomal subunit protein bL12 (126 aa).

Belongs to the bacterial ribosomal protein bL12 family. Homodimer. Part of the ribosomal stalk of the 50S ribosomal subunit. Forms a multimeric L10(L12)X complex, where L10 forms an elongated spine to which 2 to 4 L12 dimers bind in a sequential fashion. Binds GTP-bound translation factors.

Functionally, forms part of the ribosomal stalk which helps the ribosome interact with GTP-bound translation factors. Is thus essential for accurate translation. The chain is Large ribosomal subunit protein bL12 from Saccharophagus degradans (strain 2-40 / ATCC 43961 / DSM 17024).